Here is a 241-residue protein sequence, read N- to C-terminus: 7-cyano-7-deazaguanine synthase (241 aa).

15–25 (FSGGQDSTTTL) is a binding site for ATP. Residues cysteine 203, cysteine 218, cysteine 221, and cysteine 224 each coordinate Zn(2+).

Belongs to the QueC family. The cofactor is Zn(2+).

The catalysed reaction is 7-carboxy-7-deazaguanine + NH4(+) + ATP = 7-cyano-7-deazaguanine + ADP + phosphate + H2O + H(+). The protein operates within purine metabolism; 7-cyano-7-deazaguanine biosynthesis. Its function is as follows. Catalyzes the ATP-dependent conversion of 7-carboxy-7-deazaguanine (CDG) to 7-cyano-7-deazaguanine (preQ(0)). The protein is 7-cyano-7-deazaguanine synthase of Azorhizobium caulinodans (strain ATCC 43989 / DSM 5975 / JCM 20966 / LMG 6465 / NBRC 14845 / NCIMB 13405 / ORS 571).